We begin with the raw amino-acid sequence, 259 residues long: Adenosylcobinamide-GDP ribazoletransferase (259 aa).

Transmembrane regions (helical) follow at residues 27 to 47, 51 to 71, 100 to 120, 124 to 144, 175 to 195, and 219 to 239; these read ITFL…ILYI, FSHL…NGLN, VGAG…LSLA, LYIG…SMMI, FLAI…VIVA, and VIGF…IIIA.

It belongs to the CobS family. The cofactor is Mg(2+).

It localises to the cell membrane. The enzyme catalyses alpha-ribazole + adenosylcob(III)inamide-GDP = adenosylcob(III)alamin + GMP + H(+). It carries out the reaction alpha-ribazole 5'-phosphate + adenosylcob(III)inamide-GDP = adenosylcob(III)alamin 5'-phosphate + GMP + H(+). The protein operates within cofactor biosynthesis; adenosylcobalamin biosynthesis; adenosylcobalamin from cob(II)yrinate a,c-diamide: step 7/7. Its function is as follows. Joins adenosylcobinamide-GDP and alpha-ribazole to generate adenosylcobalamin (Ado-cobalamin). Also synthesizes adenosylcobalamin 5'-phosphate from adenosylcobinamide-GDP and alpha-ribazole 5'-phosphate. This is Adenosylcobinamide-GDP ribazoletransferase from Thermoplasma volcanium (strain ATCC 51530 / DSM 4299 / JCM 9571 / NBRC 15438 / GSS1).